The primary structure comprises 193 residues: Holliday junction branch migration complex subunit RuvA (193 aa).

Residues 1–64 (MIGRIAGVLL…EDAHLLYGFG (64 aa)) form a domain I region. A domain II region spans residues 65 to 139 (TAEERSTFRE…GKIGADLGAM (75 aa)). The tract at residues 139 to 143 (MAGAA) is flexible linker. Residues 144–193 (SASDHASDILNALLALGYSEKEALTAVKNVPAGTGVSEGIKLALKALSKG) form a domain III region.

It belongs to the RuvA family. As to quaternary structure, homotetramer. Forms an RuvA(8)-RuvB(12)-Holliday junction (HJ) complex. HJ DNA is sandwiched between 2 RuvA tetramers; dsDNA enters through RuvA and exits via RuvB. An RuvB hexamer assembles on each DNA strand where it exits the tetramer. Each RuvB hexamer is contacted by two RuvA subunits (via domain III) on 2 adjacent RuvB subunits; this complex drives branch migration. In the full resolvosome a probable DNA-RuvA(4)-RuvB(12)-RuvC(2) complex forms which resolves the HJ.

It is found in the cytoplasm. Its function is as follows. The RuvA-RuvB-RuvC complex processes Holliday junction (HJ) DNA during genetic recombination and DNA repair, while the RuvA-RuvB complex plays an important role in the rescue of blocked DNA replication forks via replication fork reversal (RFR). RuvA specifically binds to HJ cruciform DNA, conferring on it an open structure. The RuvB hexamer acts as an ATP-dependent pump, pulling dsDNA into and through the RuvAB complex. HJ branch migration allows RuvC to scan DNA until it finds its consensus sequence, where it cleaves and resolves the cruciform DNA. The sequence is that of Holliday junction branch migration complex subunit RuvA from Paraburkholderia phytofirmans (strain DSM 17436 / LMG 22146 / PsJN) (Burkholderia phytofirmans).